We begin with the raw amino-acid sequence, 267 residues long: uncharacterized protein (267 aa).

The disordered stretch occupies residues 1–55 (MTEERKETFEEEINQSERIDADEEPLSRMSRKASRQSKQKQKQKQKPRQERGEST). A compositionally biased stretch (acidic residues) spans 9 to 24 (FEEEINQSERIDADEE). Over residues 29–46 (MSRKASRQSKQKQKQKQK) the composition is skewed to basic residues. Transmembrane regions (helical) follow at residues 93–115 (YKYGLISMLIFSIIFSIGNWFQL), 135–157 (GFLVVLVYLLIFFAVMVFAIWAV), 173–195 (AVLGSLLVPVIAVSILWLIFAIV), 199–221 (MLTVLFTVLILFSIFFIIALYVQ), and 234–256 (YIYCVFAVVAIALLFTAVTWPFI).

It is found in the cell membrane. This is an uncharacterized protein from Bacillus subtilis (strain 168).